We begin with the raw amino-acid sequence, 637 residues long: Early transcription factor 70 kDa subunit (637 aa).

Residues Arg-32–Glu-185 form the Helicase ATP-binding domain. His-45 to Thr-52 contacts ATP. A DEXH box motif is present at residues Asp-135–His-138. The 181-residue stretch at Lys-327–Leu-507 folds into the Helicase C-terminal domain.

Belongs to the helicase family. VETF subfamily. Heterodimer of a 70 kDa and a 82 kDa subunit. Part of the early transcription complex composed of ETF, RAP94/OPG109, and the DNA-directed RNA polymerase.

It is found in the virion. In terms of biological role, acts with RNA polymerase to initiate transcription from early gene promoters. Is recruited by the RPO-associated protein of 94 kDa RAP94/OPG109 to form the early transcription complex, which also contains the core RNA polymerase. ETF heterodimer binds to early gene promoters. This chain is Early transcription factor 70 kDa subunit (OPG118), found in Homo sapiens (Human).